We begin with the raw amino-acid sequence, 816 residues long: Lon protease (816 aa).

In terms of domain architecture, Lon N-terminal spans 40–244; it reads VPLIAVPSHP…KVLELLYEEL (205 aa). 398 to 405 provides a ligand contact to ATP; the sequence is GPPGVGKT. In terms of domain architecture, Lon proteolytic spans 636–816; that stretch reads AMSPGMVMGL…SMKEVIKLLF (181 aa). Residues S724 and K767 contribute to the active site.

The protein belongs to the peptidase S16 family. As to quaternary structure, homohexamer. Organized in a ring with a central cavity.

Its subcellular location is the cytoplasm. It catalyses the reaction Hydrolysis of proteins in presence of ATP.. In terms of biological role, ATP-dependent serine protease that mediates the selective degradation of mutant and abnormal proteins as well as certain short-lived regulatory proteins. Required for cellular homeostasis and for survival from DNA damage and developmental changes induced by stress. Degrades polypeptides processively to yield small peptide fragments that are 5 to 10 amino acids long. Binds to DNA in a double-stranded, site-specific manner. This chain is Lon protease, found in Borrelia duttonii (strain Ly).